An 85-amino-acid chain; its full sequence is Colicin-E8 immunity protein in ColE6 (85 aa).

Belongs to the colicins ColE2/ColE8/ColE9 and pyocins S1/S2 family.

The polypeptide is Colicin-E8 immunity protein in ColE6 (imm) (Escherichia coli).